The chain runs to 596 residues: Germinal center kinase 3 (596 aa).

Positions Met1–Ser54 are enriched in low complexity. The tract at residues Met1 to Pro80 is disordered. Phosphothreonine; by autocatalysis occurs at positions 13 and 32. The segment covering Ser67–Val77 has biased composition (pro residues). One can recognise a Protein kinase domain in the interval Tyr108–Phe386. ATP is bound by residues Ile114–Val122 and Lys137. A Phosphoserine; by autocatalysis modification is found at Ser190. Asp240 (proton acceptor) is an active-site residue. Thr280 is subject to Phosphothreonine. At Ser405 the chain carries Phosphoserine; by autocatalysis. Ser419 carries the post-translational modification Phosphoserine. The disordered stretch occupies residues Asn429–Pro496. Residues Phe432–Glu450 are compositionally biased toward acidic residues. Gly residues predominate over residues Gly466–Ala479.

It belongs to the protein kinase superfamily. STE Ser/Thr protein kinase family. STE20 subfamily. In terms of assembly, interacts (via C-terminus) with clh-3; required for the phosphorylation-mediated inhibition of clh-3 function. Interacts (via C-terminus) with wnk-1; the interaction is direct. Phosphorylated at Thr-280 and Ser-419 probably by wnk-1; phosphorylation results in weak activation. Predominantly autophosphorylated at Thr-32 and Ser-190 and weakly autophosphorylated at Thr-13 and Ser-405 in vitro. In terms of tissue distribution, ubiquitously expressed with a higher expression in the excretory cell. Expressed in both male and female germ cells; up-regulated in maturing spermatocytes but absent in mature sperm.

It localises to the cytoplasm. Its subcellular location is the nucleus. The catalysed reaction is L-seryl-[protein] + ATP = O-phospho-L-seryl-[protein] + ADP + H(+). The enzyme catalyses L-threonyl-[protein] + ATP = O-phospho-L-threonyl-[protein] + ADP + H(+). In terms of biological role, plays a role in osmotic stress responses by regulating ion homeostasis and by controlling cell volume via the phosphorylation-mediated inhibition of the chloride channel clh-3. In addition, increases gpdh-1 translation upon osmotic stress, likely downstream of wnk-1. Involved in several developmental processes including the tubular formation of the excretory canals, the formation of the intestine and the progression through larval stages. In addition, required for germ line development by controlling meiosis and chromosomal segregation during spermatogenesis. By controlling clh-3 activity, may regulate the development of the excretory canals and fertility. In Caenorhabditis elegans, this protein is Germinal center kinase 3.